We begin with the raw amino-acid sequence, 343 residues long: GDSL esterase/lipase EXL4 (343 aa).

Positions 1 to 21 (MCSKITLVLTLFSSYFISTDA) are cleaved as a signal peptide. Asn23 carries N-linked (GlcNAc...) asparagine glycosylation. The active-site Nucleophile is Ser35. Residues Asp318 and His321 contribute to the active site.

This sequence belongs to the 'GDSL' lipolytic enzyme family. Flower buds and pollen.

Its subcellular location is the secreted. It localises to the extracellular space. The protein localises to the extracellular matrix. The protein resides in the pollen coat. Its function is as follows. Required for the formation of pollen coats and male fertility. The sequence is that of GDSL esterase/lipase EXL4 (EXL4) from Arabidopsis thaliana (Mouse-ear cress).